The sequence spans 564 residues: E3 ubiquitin-protein ligase hrd-like protein 1 (564 aa).

The chain crosses the membrane as a helical span at residues 17–37 (SYLALSVLVAIVASVTVFTTF). Asn-53 carries an N-linked (GlcNAc...) asparagine glycan. A run of 7 helical transmembrane segments spans residues 61–81 (YGLN…HYIL), 86–106 (LIWV…RLII), 123–143 (QAFF…IGPQ), 148–168 (VMPW…QFIT), 185–205 (KISF…FLIS), 215–235 (PAVL…YILF), and 272–292 (LSFA…IFFL). An RING-type; atypical zinc finger spans residues 335–373 (CVVCWELLGTSRRLPCSHQFHDWCLMWWLAQDSSCPTCR). The 43-residue stretch at 432 to 474 (QLQTMLEQVREMFPQMSVDIIMTDLRQSGSAQSTIENILEGRI) folds into the CUE domain.

Its subcellular location is the membrane. In terms of biological role, proposed to have a role in neuroprotection. The protein is E3 ubiquitin-protein ligase hrd-like protein 1 (hrdl-1) of Caenorhabditis elegans.